Consider the following 426-residue polypeptide: Proline--tRNA ligase (426 aa).

It belongs to the class-II aminoacyl-tRNA synthetase family. ProS type 2 subfamily. In terms of assembly, homodimer.

The protein resides in the cytoplasm. It carries out the reaction tRNA(Pro) + L-proline + ATP = L-prolyl-tRNA(Pro) + AMP + diphosphate. Functionally, catalyzes the attachment of proline to tRNA(Pro) in a two-step reaction: proline is first activated by ATP to form Pro-AMP and then transferred to the acceptor end of tRNA(Pro). The sequence is that of Proline--tRNA ligase from Rickettsia peacockii (strain Rustic).